The chain runs to 374 residues: Beta sliding clamp (374 aa).

This sequence belongs to the beta sliding clamp family. As to quaternary structure, forms a ring-shaped head-to-tail homodimer around DNA which binds and tethers DNA polymerases and other proteins to the DNA. The DNA replisome complex has a single clamp-loading complex (3 tau and 1 each of delta, delta', psi and chi subunits) which binds 3 Pol III cores (1 core on the leading strand and 2 on the lagging strand) each with a beta sliding clamp dimer. Additional proteins in the replisome are other copies of gamma, psi and chi, Ssb, DNA helicase and RNA primase.

It is found in the cytoplasm. Its function is as follows. Confers DNA tethering and processivity to DNA polymerases and other proteins. Acts as a clamp, forming a ring around DNA (a reaction catalyzed by the clamp-loading complex) which diffuses in an ATP-independent manner freely and bidirectionally along dsDNA. Initially characterized for its ability to contact the catalytic subunit of DNA polymerase III (Pol III), a complex, multichain enzyme responsible for most of the replicative synthesis in bacteria; Pol III exhibits 3'-5' exonuclease proofreading activity. The beta chain is required for initiation of replication as well as for processivity of DNA replication. The chain is Beta sliding clamp (dnaN) from Helicobacter pylori (strain ATCC 700392 / 26695) (Campylobacter pylori).